The following is a 33-amino-acid chain: Brevinin-2HSb (33 aa).

A disulfide bridge connects residues C27 and C33.

As to expression, expressed by the skin glands.

It localises to the secreted. Functionally, has antibacterial activity against the Gram-positive bacterium S.aureus ATCC 25923 and the Gram-negative bacterium E.coli ATCC 25726. The sequence is that of Brevinin-2HSb from Odorrana hosii (Hose's rock frog).